The sequence spans 294 residues: Acetylglutamate kinase (294 aa).

Substrate-binding positions include 63-64 (GG), Arg-85, and Asn-188.

This sequence belongs to the acetylglutamate kinase family. ArgB subfamily.

The protein localises to the cytoplasm. It carries out the reaction N-acetyl-L-glutamate + ATP = N-acetyl-L-glutamyl 5-phosphate + ADP. Its pathway is amino-acid biosynthesis; L-arginine biosynthesis; N(2)-acetyl-L-ornithine from L-glutamate: step 2/4. Its function is as follows. Catalyzes the ATP-dependent phosphorylation of N-acetyl-L-glutamate. This Methanococcus maripaludis (strain C6 / ATCC BAA-1332) protein is Acetylglutamate kinase.